The primary structure comprises 690 residues: Glycine--tRNA ligase beta subunit (690 aa).

Belongs to the class-II aminoacyl-tRNA synthetase family. Tetramer of two alpha and two beta subunits.

The protein resides in the cytoplasm. The enzyme catalyses tRNA(Gly) + glycine + ATP = glycyl-tRNA(Gly) + AMP + diphosphate. The polypeptide is Glycine--tRNA ligase beta subunit (Tolumonas auensis (strain DSM 9187 / NBRC 110442 / TA 4)).